Here is an 831-residue protein sequence, read N- to C-terminus: Cysteine--tRNA ligase, cytoplasmic (831 aa).

Ala-2 is subject to N-acetylalanine. Ser-102 bears the Phosphoserine mark. Zn(2+) is bound at residue Cys-138. Gly-139 serves as a coordination point for L-cysteine. Positions 140–150 match the 'HIGH' region motif; the sequence is PTVYDASHMGH. Position 179 (Thr-179) interacts with L-cysteine. Positions 184–187 match the 'KIIK' region motif; that stretch reads KIIR. A phosphoserine mark is found at Ser-388 and Ser-390. 3 residues coordinate Zn(2+): Cys-431, His-456, and Glu-460. His-456 contributes to the L-cysteine binding site. The 'KMSKS' region signature appears at 489-493; sequence KMSKS. Lys-492 serves as a coordination point for ATP. Residues 736-762 show a composition bias toward basic and acidic residues; it reads GKKRAEEEKRRKKEEAARKKQEQEAAK. The tract at residues 736-766 is disordered; it reads GKKRAEEEKRRKKEEAARKKQEQEAAKLAKM. Position 829 is a phosphoserine (Ser-829).

This sequence belongs to the class-I aminoacyl-tRNA synthetase family. In terms of assembly, homodimer. The cofactor is Zn(2+).

Its subcellular location is the cytoplasm. The enzyme catalyses tRNA(Cys) + L-cysteine + ATP = L-cysteinyl-tRNA(Cys) + AMP + diphosphate. Its function is as follows. Catalyzes the ATP-dependent ligation of cysteine to tRNA(Cys). This is Cysteine--tRNA ligase, cytoplasmic (Cars1) from Mus musculus (Mouse).